The chain runs to 341 residues: Protein pelota homolog (341 aa).

Belongs to the eukaryotic release factor 1 family. Pelota subfamily. As to quaternary structure, monomer. A divalent metal cation serves as cofactor.

The protein resides in the cytoplasm. In terms of biological role, may function in recognizing stalled ribosomes, interact with stem-loop structures in stalled mRNA molecules, and effect endonucleolytic cleavage of the mRNA. May play a role in the release non-functional ribosomes and degradation of damaged mRNAs. Has endoribonuclease activity. In Methanoculleus marisnigri (strain ATCC 35101 / DSM 1498 / JR1), this protein is Protein pelota homolog.